We begin with the raw amino-acid sequence, 114 residues long: Hydrogenase maturation factor HypA (114 aa).

His-2 is a Ni(2+) binding site. Residues Cys-73, Cys-76, Cys-90, and Cys-93 each contribute to the Zn(2+) site.

This sequence belongs to the HypA/HybF family.

Its function is as follows. Involved in the maturation of [NiFe] hydrogenases. Required for nickel insertion into the metal center of the hydrogenase. The protein is Hydrogenase maturation factor HypA of Chloroflexus aggregans (strain MD-66 / DSM 9485).